Consider the following 200-residue polypeptide: Large ribosomal subunit protein uL4 (200 aa).

The disordered stretch occupies residues 38–80; it reads GRQGSKQQKTRSDVSGGGKRPWRQKGTGRARAGTTRGPIWRGG.

The protein belongs to the universal ribosomal protein uL4 family. Part of the 50S ribosomal subunit.

Its function is as follows. One of the primary rRNA binding proteins, this protein initially binds near the 5'-end of the 23S rRNA. It is important during the early stages of 50S assembly. It makes multiple contacts with different domains of the 23S rRNA in the assembled 50S subunit and ribosome. Forms part of the polypeptide exit tunnel. The sequence is that of Large ribosomal subunit protein uL4 from Stutzerimonas stutzeri (strain A1501) (Pseudomonas stutzeri).